A 1154-amino-acid polypeptide reads, in one-letter code: CRISPR-associated endoribonuclease Cas13a (1154 aa).

HEPN-like fold stretches follow at residues 330–466 (TTSN…RFIN) and 923–1154 (FVHL…EMKK).

Belongs to the CRISPR-associated endoribonuclease Cas13a family. The cofactor is a divalent metal cation.

With respect to regulation, target RNA acts as an activator for non-specific ssRNA degradation. Its function is as follows. CRISPR (clustered regularly interspaced short palindromic repeat), is an adaptive immune system that provides protection against mobile genetic elements (viruses, transposable elements and conjugative plasmids). CRISPR clusters contain sequences complementary to antecedent mobile elements and target invading nucleic acids. Unlike many single-component effectors, this CRISPR-Cas system targets RNA. CRISPR clusters are transcribed from pre-CRISPR RNA (crRNA) and processed into crRNA by this protein. Cleaves linear target ssRNA in a pre-crRNA-dependent fashion, preferentially before U residues. Binding a viable target RNA target activates this protein for non-specific RNA degradation in vitro (called collateral RNA degradation), which is fairly sensitive as it requires picomolar levels of viable target RNA. In Paludibacter propionicigenes (strain DSM 17365 / JCM 13257 / WB4), this protein is CRISPR-associated endoribonuclease Cas13a.